A 109-amino-acid polypeptide reads, in one-letter code: MTQSSYNPIEQEGSPELLLQEKIRRPKMYQVLLHNDNYTTMEFVVSILMKIFRKTMEQATSIMLSVHRKGIGVAGVYTRELAETKVNTTHMLAREAGFPLRCTLQEVDE.

It belongs to the ClpS family. Binds to the N-terminal domain of the chaperone ClpA.

Functionally, involved in the modulation of the specificity of the ClpAP-mediated ATP-dependent protein degradation. The polypeptide is ATP-dependent Clp protease adapter protein ClpS (Lawsonia intracellularis (strain PHE/MN1-00)).